We begin with the raw amino-acid sequence, 291 residues long: Bifunctional protein FolD (291 aa).

NADP(+)-binding positions include 165 to 167 (GRS), S190, and I231.

This sequence belongs to the tetrahydrofolate dehydrogenase/cyclohydrolase family. As to quaternary structure, homodimer.

It carries out the reaction (6R)-5,10-methylene-5,6,7,8-tetrahydrofolate + NADP(+) = (6R)-5,10-methenyltetrahydrofolate + NADPH. It catalyses the reaction (6R)-5,10-methenyltetrahydrofolate + H2O = (6R)-10-formyltetrahydrofolate + H(+). It participates in one-carbon metabolism; tetrahydrofolate interconversion. Its function is as follows. Catalyzes the oxidation of 5,10-methylenetetrahydrofolate to 5,10-methenyltetrahydrofolate and then the hydrolysis of 5,10-methenyltetrahydrofolate to 10-formyltetrahydrofolate. This Azoarcus sp. (strain BH72) protein is Bifunctional protein FolD.